We begin with the raw amino-acid sequence, 532 residues long: Probable cytochrome c oxidase subunit 1 (532 aa).

8 consecutive transmembrane segments (helical) span residues 33–53 (IMYI…SLLF), 74–94 (VLIT…ALFG), 95–115 (GFGN…FPRL), 118–138 (ISFW…FVDG), 163–183 (MAIF…INLI), 200–220 (PLFV…MPVL), 252–272 (LFWF…FGIV), and 284–304 (IFGY…GFIV). Fe(II)-heme a is bound at residue His79. Cu cation is bound by residues His258 and Tyr262. The Cu cation site is built by His307 and His308. Transmembrane regions (helical) follow at residues 318–338 (ALIY…IKIF) and 355–375 (MLFS…GIIL). A heme a3-binding site is contributed by His393. A run of 3 helical transmembrane segments spans residues 394-414 (FHYT…YYWF), 431-451 (FWIT…LGLA), and 473-493 (IGAG…FYTL). His395 is a Fe(II)-heme a binding site.

It belongs to the heme-copper respiratory oxidase family.

It is found in the cell membrane. The catalysed reaction is 4 Fe(II)-[cytochrome c] + O2 + 8 H(+)(in) = 4 Fe(III)-[cytochrome c] + 2 H2O + 4 H(+)(out). Its pathway is energy metabolism; oxidative phosphorylation. Cytochrome c oxidase is the component of the respiratory chain that catalyzes the reduction of oxygen to water. Subunits 1-3 form the functional core of the enzyme complex. CO I is the catalytic subunit of the enzyme. Electrons originating in cytochrome c are transferred via the copper A center of subunit 2 and heme A of subunit 1 to the bimetallic center formed by heme A3 and copper B. The sequence is that of Probable cytochrome c oxidase subunit 1 (ctaD) from Rickettsia bellii (strain RML369-C).